The primary structure comprises 383 residues: Izumo sperm-egg fusion protein 1 (383 aa).

Positions 1 to 21 are cleaved as a signal peptide; sequence MGLHFTLLLAALANCLCPARL. 5 disulfide bridges follow: Cys-22/Cys-149, Cys-25/Cys-152, Cys-135/Cys-159, Cys-139/Cys-165, and Cys-182/Cys-233. Over 22 to 306 the chain is Extracellular; the sequence is CIICDPFVVA…HRPEKKLKSR (285 aa). The segment at 148-160 is important for interaction with IZUMO1R; that stretch reads WCNKCEKQMHFCR. One can recognise an Ig-like C2-type domain in the interval 167–251; it reads ERQIEVHRLE…PATIIYYHVT (85 aa). Asn-204 carries N-linked (GlcNAc...) asparagine glycosylation. Residues 307-327 form a helical membrane-spanning segment; that stretch reads LLILLILGFVVLVASVIASVL. The Cytoplasmic portion of the chain corresponds to 328–383; sequence HFRKTRVKSKNSNVENKTSAAEFKSEAESPQKMGSRKLSQAEFHTDSSDKVEEADN. The interval 335-383 is disordered; the sequence is KSKNSNVENKTSAAEFKSEAESPQKMGSRKLSQAEFHTDSSDKVEEADN. The segment covering 337-346 has biased composition (polar residues); that stretch reads KNSNVENKTS. Residues Ser-339, Ser-346, and Ser-366 each carry the phosphoserine modification. Basic and acidic residues predominate over residues 370–383; it reads FHTDSSDKVEEADN. Residue Thr-372 is modified to Phosphothreonine.

This sequence belongs to the Izumo family. In terms of assembly, monomer, homodimer; disulfide-linked and homooligomer; depending on the context. Interacts with IZUMO1R/JUNO. IZUMO1 and IZUMO1R/JUNO form a complex with 1:1 stoichiometry. In gamete recognition, IZUMO1R/JUNO first binds to monomeric IZUMO1. The weak, but specific interaction with IZUMO1R/JUNO induces IZUMO1 homodimerization. The process follows a tight binding phase where IZUMO1 bends the entire structure towards the sperm membrane side through a thiol-disulfide exchange reaction. The molecule no longer binds to IZUMO1R/JUNO and instead binds to a putative second oocyte receptor. Interacts with ACE3. Part of a oolemmal binding multimeric complex (IZUMO1 complex) composed at least of IZUMO1 and GLIPR1L1; the complex assemblage is influenced by the maturation status of the male germ cell. Interacts with GLIPR1L1. Interacts with FREY; the interaction retains IZUMO1 at the endoplasmic reticulum membrane and coordinates IZUMO1 complex assembly. Interacts with WDR54. Forms a complex with SPACA6 and TMEM81 on spermatocyte cell membrane. In terms of processing, N-glycosylated. Glycosylation is not essential for fusion and for proper protein trafficking in sperm. Post-translationally, phosphorylated. The cytoplasmic C-terminus is phosphorylated and undergoes phosphorylation changes during epididymal transit. Expressed in sperm (at protein level).

The protein resides in the cell membrane. It is found in the cytoplasmic vesicle. Its subcellular location is the secretory vesicle. It localises to the acrosome membrane. Its function is as follows. Essential sperm cell-surface protein required for fertilization by acting as a ligand for IZUMO1R/JUNO receptor on egg. The IZUMO1:IZUMO1R/JUNO interaction is a necessary adhesion event between sperm and egg that is required for fertilization but is not sufficient for cell fusion. The ligand-receptor interaction probably does not act as a membrane 'fusogen'. Plays a critical role in sperm-oolemma binding prior to plasma membrane fusion. Can mediate cell-cell fusion in cultured mammalian cells independently of its binding to IZUMO1R/JUNO. The protein is Izumo sperm-egg fusion protein 1 of Rattus norvegicus (Rat).